Here is a 390-residue protein sequence, read N- to C-terminus: Probable inactive secreted aspartyl protease (390 aa).

An N-terminal signal peptide occupies residues 1 to 20 (MQLTIKALVGILTTISAATA). A propeptide spans 21–69 (VSFDMENLGAEKRGVSGEELHMLHGNEVLARFANGVYPEVANGTRVSKR) (removed in mature form). N-linked (GlcNAc...) asparagine glycosylation occurs at N62. One can recognise a Peptidase A1 domain in the interval 86–388 (WAVKAKIGSN…KFDSNEMQIA (303 aa)). Residues D104 and D273 contribute to the active site. A disulfide bridge connects residues C313 and C346.

The protein belongs to the peptidase A1 family.

The protein resides in the secreted. Probable inactive secreted aspartyl protease. May promote an inflammatory immune response in the host when the host skin barrier is breached. Has no detectable protease activity in vitro on fluorogenic substrates, a peptide library, or with the general protease substrate casein. The presence of the enzyme also does not affect the activity of the secreted aspartyl protease SAP1. This chain is Probable inactive secreted aspartyl protease, found in Malassezia globosa (strain ATCC MYA-4612 / CBS 7966) (Dandruff-associated fungus).